The sequence spans 101 residues: Urease subunit beta (101 aa).

It belongs to the urease beta subunit family. As to quaternary structure, heterotrimer of UreA (gamma), UreB (beta) and UreC (alpha) subunits. Three heterotrimers associate to form the active enzyme.

Its subcellular location is the cytoplasm. The catalysed reaction is urea + 2 H2O + H(+) = hydrogencarbonate + 2 NH4(+). The protein operates within nitrogen metabolism; urea degradation; CO(2) and NH(3) from urea (urease route): step 1/1. This chain is Urease subunit beta, found in Pseudomonas syringae pv. syringae (strain B728a).